The sequence spans 1138 residues: MEGWYLVVLGVCYTLTLAMPKTIYELKMECPHTVGLGQGYIIGSTELGLISIEAASDIKLESSCNFDLHTTSMAQKSFTQVEWRKKSDTTDTTNAASTTFEAQTKTVNLRGTCILAPELYDTLKKVKKTVLCYDLTCNQTHCQPTVYLIAPVLTCMSIRSCMASVFTSRIQVIYEKTHCVTGQLIEGQCFNPAHTLTLSQPAHTYDTVTLPISCFFTPKKSEQLKVIKTFEGILTKTGCTENALQGYYVCFLGSHSEPLIVPSLEDIRSAEVVSRMLVHPRGEDHDAIQNSQSHLRIVGPITAKVPSTSSTDTLKGTAFAGVPMYSSLSTLVRNADPEFVFSPGIVPESNHSTCDKKTVPITWTGYLPISGEMEKVTGCTVFCTLAGPGASCEAYSENGIFNISSPTCLVNKVQRFRGSEQKINFICQRVDQDVVVYCNGQKKVILTKTLVIGQCIYTFTSLFSLMPDVAHSLAVELCVPGLHGWATVMLLSTFCFGWVLIPAVTLIILKCLRVLTFSCSHYTNESKFKFILEKVKIEYQKTMGSMVCDVCHHECETAKELESHRQSCINGQCPYCMTITEATESALQAHYSICKLTGRFQEALKKSLKKPEVKKGCYRTLGVFRYKSRCYVGLVWCLLLTCEIVIWAASAETPLMESGWSDTAHGVGEIPMKTDLELDFSLPSSSSYSYRRKLTNPANKEESIPFHFQMEKQVIHAEIQPLGHWMDATFNIKTAFHCYGACQKYSYPWQTSKCFFEKDYQYETGWGCNPGDCPGVGTGCTACGVYLDKLKSVGKAYKIISLKYTRKVCIQLGTEQTCKHIDANDCLVTPSVKVCIVGTVSKLQPSDTLLFLGPLEQGGIILKQWCTTSCAFGDPGDIMSTPSGMRCPEHTGSFRKICGFATTPVCEYQGNTISGYKRMMATKDSFQSFNLTEPHITTNKLEWIDPDGNTRDHVNLVLNRDVSFQDLSDNPCKVDLHTQAIEGAWGSGVGFTLTCTVGLTECPSFMTSIKACDLAMCYGSTVTNLARGSNTVKVVGKGGHSGSSFKCCHDTDCSSEGLLASAPHLERVTGFNQIDSDKVYDDGAPPCTFKCWFTKSGEWLLGILNGNWIVVVVLVVILILSIIMFSVLCPRRGHKKTV.

The first 18 residues, 1–18 (MEGWYLVVLGVCYTLTLA), serve as a signal peptide directing secretion. The Lumenal portion of the chain corresponds to 19–487 (MPKTIYELKM…CVPGLHGWAT (469 aa)). 11 cysteine pairs are disulfide-bonded: Cys30–Cys155, Cys64–Cys161, Cys113–Cys132, Cys137–Cys142, Cys179–Cys189, Cys214–Cys250, Cys239–Cys354, Cys379–Cys438, Cys383–Cys392, Cys408–Cys427, and Cys455–Cys478. An N-linked (GlcNAc...) asparagine; by host glycan is attached at Asn138. N-linked (GlcNAc...) asparagine; by host glycosylation is present at Asn350. N-linked (GlcNAc...) asparagine; by host glycosylation occurs at Asn402. Residues 488-508 (VMLLSTFCFGWVLIPAVTLII) traverse the membrane as a helical segment. Residues 509–630 (LKCLRVLTFS…LGVFRYKSRC (122 aa)) are Cytoplasmic-facing. The segment at 519 to 536 (CSHYTNESKFKFILEKVK) is binding to the ribonucleoprotein. CCHC-type zinc fingers lie at residues 548-568 (CDVC…RQSC) and 573-594 (CPYC…YSIC). Binding to the ribonucleoprotein regions lie at residues 591 to 608 (YSIC…KKSL), 595 to 606 (KLTGRFQEALKK), and 614 to 628 (KKGC…RYKS). The tract at residues 610–637 (KPEVKKGCYRTLGVFRYKSRCYVGLVWC) is interaction with host TRAF3. Residues 614-637 (KKGCYRTLGVFRYKSRCYVGLVWC) form the ITAM domain. Tyr618 and Tyr631 each carry phosphotyrosine. Positions 618 to 621 (YRTL) match the YxxL motif. The chain crosses the membrane as a helical span at residues 631–651 (YVGLVWCLLLTCEIVIWAASA). The Lumenal segment spans residues 652–1107 (ETPLMESGWS…EWLLGILNGN (456 aa)). 8 cysteine pairs are disulfide-bonded: Cys738/Cys773, Cys742/Cys780, Cys754/Cys887, Cys768/Cys898, Cys783/Cys906, Cys809/Cys818, Cys826/Cys835, and Cys866/Cys870. A fusion loop region spans residues 760 to 780 (YQYETGWGCNPGDCPGVGTGC). The N-linked (GlcNAc...) asparagine; by host glycan is linked to Asn930. Intrachain disulfides connect Cys972/Cys1002, Cys995/Cys1047, Cys1012/Cys1017, Cys1048/Cys1053, and Cys1087/Cys1091. A helical transmembrane segment spans residues 1108-1128 (WIVVVVLVVILILSIIMFSVL). The tract at residues 1124 to 1138 (MFSVLCPRRGHKKTV) is binding to the ribonucleoprotein. At 1129–1138 (CPRRGHKKTV) the chain is on the cytoplasmic side.

The protein belongs to the hantavirus envelope glycoprotein family. As to quaternary structure, homodimer. Homotetramer; forms heterotetrameric Gn-Gc spikes in the pre-fusion conformation. Interacts (via C-terminus) with the nucleoprotein. Interacts with host TUFM; this interaction contributes to the virus-induced degradation of mitochondria by autophagy, which leads to degradation of host MAVS and inhibition of type I interferon (IFN) responses. Interacts with host MAP1LC3B; this interaction contributes to the virus-induced degradation of mitochondria by autophagy, which leads to degradation of host MAVS and inhibition of type I interferon (IFN) responses. Interacts (via C-terminus) with host TRAF3; this interaction inhibits the formation of TRAF3-TBK1 complexes. Homodimer. Homotetramer; forms heterotetrameric Gn-Gc spikes in the pre-fusion conformation. Homotrimer; forms homotrimer in the post-fusion conformation at acidic pH. Interacts (via C-terminus) with the nucleoprotein. Post-translationally, envelope polyprotein precursor is quickly cleaved in vivo just after synthesis, presumably by host signal peptidase.

It localises to the virion membrane. It is found in the host cell surface. The protein resides in the host Golgi apparatus membrane. Its subcellular location is the host endoplasmic reticulum membrane. The protein localises to the host mitochondrion. Functionally, forms homotetramers with glycoprotein C at the surface of the virion. Attaches the virion to host cell receptors including integrin ITGAV/ITGB3. This attachment induces virion internalization possibly through clathrin-dependent endocytosis and dynamin-independent macropinocytosis. Mediates the assembly and budding of infectious virus particles through its interaction with the nucleocapsid protein and the viral genome. May dysregulate normal immune and endothelial cell responses through an ITAM motif. Translocates to mitochondria, binds to host TUFM and recruits MAP1LC3B. These interactions induce mitochondrial autophagy and therefore destruction of host MAVS leading to inhibition of type I interferon (IFN) responses. Concomitant breakdown of glycoprotein N is apparently prevented by the nucleoprotein that may inhibit Gn-stimulated autophagosome-lysosome fusion. Interacts with the viral genomic RNA. Inhibits the host RIG-I/TBK1 pathway by disrupting the formation of TBK1-TRAF3 complexes and downstream signaling responses required for IFN-beta transcription. In terms of biological role, forms homotetramers with glycoprotein N at the surface of the virion. Attaches the virion to host cell receptors including integrin ITGAV/ITGB3. This attachment induces virion internalization predominantly through clathrin-dependent endocytosis. Class II fusion protein that promotes fusion of viral membrane with host endosomal membrane after endocytosis of the virion. The chain is Envelopment polyprotein (GP) from Abrothrix longipilis (Long-haired grass mouse).